The following is a 401-amino-acid chain: Rho-N domain-containing protein 1, chloroplastic (401 aa).

Residues 1 to 63 constitute a chloroplast transit peptide; it reads MAMSGTFHLT…VPNRSSFVCR (63 aa). 2 disordered regions span residues 73 to 129 and 180 to 361; these read PDFS…PGPR and KHSG…EEAV. Polar residues-rich tracts occupy residues 102-126, 210-223, and 240-265; these read DMLSSRNGPLFNLSSSPKFQATSSP, TGNLVTSGNKDNNA, and PRSQSPPAYSSEATFDQSSSYSVTWT. A compositionally biased stretch (basic and acidic residues) spans 266 to 290; the sequence is QKKDTVELHDEPEHEPAYEHEHEPE. Acidic residues predominate over residues 339–358; the sequence is LSDDDESLDDADEDSDEAEE. Positions 339-371 form a coiled coil; that stretch reads LSDDDESLDDADEDSDEAEEEAVKDLSELKLVE.

As to quaternary structure, homodimer or homomultimer. Part of a chloroplastic degradosome-like complex. Interacts with RNE.

It localises to the plastid. The protein resides in the chloroplast. Its function is as follows. Binds to and supports processing of specific plastid RNAs. Associates via its C-terminal Rho-N domain to single stranded regions of 16S and 23S rRNAs or to rbcL mRNAs. May be involved in targeting transcripts to RNases such as RNE or RNase J. The chain is Rho-N domain-containing protein 1, chloroplastic (RHON1) from Arabidopsis thaliana (Mouse-ear cress).